Reading from the N-terminus, the 449-residue chain is 23S rRNA (uracil(1939)-C(5))-methyltransferase RlmD (449 aa).

A TRAM domain is found at 12 to 70 (SKQLSAKQSFSVHQLDHLGAGIAQHQGKVVFIPGALPSETVQAQLTEQKKNYARAKLIK). 4 residues coordinate [4Fe-4S] cluster: cysteine 83, cysteine 89, cysteine 92, and cysteine 170. S-adenosyl-L-methionine is bound by residues glutamine 282, phenylalanine 311, asparagine 316, glutamate 332, aspartate 359, and aspartate 379. Cysteine 405 acts as the Nucleophile in catalysis.

Belongs to the class I-like SAM-binding methyltransferase superfamily. RNA M5U methyltransferase family. RlmD subfamily.

The catalysed reaction is uridine(1939) in 23S rRNA + S-adenosyl-L-methionine = 5-methyluridine(1939) in 23S rRNA + S-adenosyl-L-homocysteine + H(+). Functionally, catalyzes the formation of 5-methyl-uridine at position 1939 (m5U1939) in 23S rRNA. This chain is 23S rRNA (uracil(1939)-C(5))-methyltransferase RlmD, found in Shewanella sp. (strain MR-7).